The sequence spans 121 residues: Small ribosomal subunit protein uS13 (121 aa).

Residues 94–121 (GLPVRGQNTKNNARTRKGPRRTVANKKK) form a disordered region. Basic residues predominate over residues 106-121 (ARTRKGPRRTVANKKK).

This sequence belongs to the universal ribosomal protein uS13 family. In terms of assembly, part of the 30S ribosomal subunit. Forms a loose heterodimer with protein S19. Forms two bridges to the 50S subunit in the 70S ribosome.

In terms of biological role, located at the top of the head of the 30S subunit, it contacts several helices of the 16S rRNA. In the 70S ribosome it contacts the 23S rRNA (bridge B1a) and protein L5 of the 50S subunit (bridge B1b), connecting the 2 subunits; these bridges are implicated in subunit movement. Contacts the tRNAs in the A and P-sites. In Anoxybacillus flavithermus (strain DSM 21510 / WK1), this protein is Small ribosomal subunit protein uS13.